The chain runs to 159 residues: F1845 fimbrial protein (159 aa).

The first 21 residues, 1–21 (MKKLAIMAAASMIFTVGSAQA), serve as a signal peptide directing secretion.

It belongs to the Dr-adhesin family.

The protein localises to the fimbrium. Its function is as follows. Hemagglutinins of uropathogenic E.coli mediate adherence to the upper urinary tract. These adhesins bind to the Dr blood group antigen and also agglutinate human erythrocytes in the presence of D-mannose (mannose-resistant hemagglutination (MRHA)). C1845 is a strain responsible for diarrheal disease. This Escherichia coli protein is F1845 fimbrial protein (daaE).